Consider the following 365-residue polypeptide: tRNA/tmRNA (uracil-C(5))-methyltransferase (365 aa).

S-adenosyl-L-methionine-binding residues include Q189, Y217, N222, E238, and D298. C323 acts as the Nucleophile in catalysis. The active-site Proton acceptor is E357.

This sequence belongs to the class I-like SAM-binding methyltransferase superfamily. RNA M5U methyltransferase family. TrmA subfamily.

It catalyses the reaction uridine(54) in tRNA + S-adenosyl-L-methionine = 5-methyluridine(54) in tRNA + S-adenosyl-L-homocysteine + H(+). The catalysed reaction is uridine(341) in tmRNA + S-adenosyl-L-methionine = 5-methyluridine(341) in tmRNA + S-adenosyl-L-homocysteine + H(+). In terms of biological role, dual-specificity methyltransferase that catalyzes the formation of 5-methyluridine at position 54 (m5U54) in all tRNAs, and that of position 341 (m5U341) in tmRNA (transfer-mRNA). The protein is tRNA/tmRNA (uracil-C(5))-methyltransferase of Shewanella sediminis (strain HAW-EB3).